Reading from the N-terminus, the 429-residue chain is MSTQHDEHDAAGATGVADQVVAAAERARAASHGLALATRAEKDAALQAMAEALLTREPEVLAANGEDVARAEANGTPPNIVDRLRLTQERVAAMAQGLRDVAALPDPVGEVLRGSTLANGLEMRQVRVPFGVVGMIYEARPNVTADAAGICLKSGNAVLLRGSSSARSSNAAIVAALRDAIAGTGLDPDVVQQVPGDSHDSVKALMRARGHVDVLIPRGGAGLIRSVVEESTVPVIETGVGNCHVYVDRAADLDKALAIVLNAKTHRTSVCNAAESLLVHADLADTFVPRVVAALQEAGVTVHGDERFQAEDGVLPATDEDYGQEYLSLDISAAVVPDLDGAIAHIRRWSSQHTEAIVTEDLAAARRFTAAVDSAAVLVNASTRFTDGGEFGFGAEIGISTQKLHARGPMGLTEMTSTKYVVTGDGHVR.

This sequence belongs to the gamma-glutamyl phosphate reductase family.

It is found in the cytoplasm. It catalyses the reaction L-glutamate 5-semialdehyde + phosphate + NADP(+) = L-glutamyl 5-phosphate + NADPH + H(+). Its pathway is amino-acid biosynthesis; L-proline biosynthesis; L-glutamate 5-semialdehyde from L-glutamate: step 2/2. Its function is as follows. Catalyzes the NADPH-dependent reduction of L-glutamate 5-phosphate into L-glutamate 5-semialdehyde and phosphate. The product spontaneously undergoes cyclization to form 1-pyrroline-5-carboxylate. The chain is Gamma-glutamyl phosphate reductase from Nocardioides sp. (strain ATCC BAA-499 / JS614).